A 561-amino-acid polypeptide reads, in one-letter code: Arginine--tRNA ligase (561 aa).

Residues 129 to 139 (ANPTGPLHVGH) carry the 'HIGH' region motif.

Belongs to the class-I aminoacyl-tRNA synthetase family. In terms of assembly, monomer.

Its subcellular location is the cytoplasm. It catalyses the reaction tRNA(Arg) + L-arginine + ATP = L-arginyl-tRNA(Arg) + AMP + diphosphate. The sequence is that of Arginine--tRNA ligase from Bordetella avium (strain 197N).